The primary structure comprises 341 residues: MKRSEFYFELPEELIAQEPLEDRASSRLMILNKKTGEIEHDIFKNITKYLKPGDCLVLNNTKVIPARLIGRREDSGGKIEFVLLKRISNNEWEILVKPGRRAKIGSKFVFGNGELIAEILDTTEVGGRIVRFYYEGVFEEVLDKLGEMPVPPYIKKKLKNKDRYQTVYAKYEGSAAAPTAGLHFTEELLEKIRQMGVKTVFITLHVGLGTFRPVKEEVIENHKMHEEFYIVTKEAAEEINETRKSGGRIIAVGTTSTRTLETVADEDGYIKEKSGWTDIFIYPGYKFKAIDGMITNFHLPESTLIMMVSAFAGKENIMRAYKIAVEKKYRFFSFGDAMLII.

This sequence belongs to the QueA family. As to quaternary structure, monomer.

The protein localises to the cytoplasm. The catalysed reaction is 7-aminomethyl-7-carbaguanosine(34) in tRNA + S-adenosyl-L-methionine = epoxyqueuosine(34) in tRNA + adenine + L-methionine + 2 H(+). It participates in tRNA modification; tRNA-queuosine biosynthesis. Transfers and isomerizes the ribose moiety from AdoMet to the 7-aminomethyl group of 7-deazaguanine (preQ1-tRNA) to give epoxyqueuosine (oQ-tRNA). The protein is S-adenosylmethionine:tRNA ribosyltransferase-isomerase of Thermoanaerobacter sp. (strain X514).